A 553-amino-acid chain; its full sequence is Arginine--tRNA ligase (553 aa).

Residues 130–140 (ANPTGPVHLGG) carry the 'HIGH' region motif.

Belongs to the class-I aminoacyl-tRNA synthetase family. Monomer.

It is found in the cytoplasm. The catalysed reaction is tRNA(Arg) + L-arginine + ATP = L-arginyl-tRNA(Arg) + AMP + diphosphate. This chain is Arginine--tRNA ligase, found in Saccharopolyspora erythraea (strain ATCC 11635 / DSM 40517 / JCM 4748 / NBRC 13426 / NCIMB 8594 / NRRL 2338).